A 1785-amino-acid chain; its full sequence is MISTAPLYSGVHNWTSSDRIRMCGINEERRAPLSDEESTTGDCQHFGSQEFCVSSSFSKVELTAVGSGSNARGADPDGSATEKLGHKSEDKPDDPQPKMDYAGNVAEAEGLLVPLSSPGDGLKLPASDSAEASNSRADCSWTPLNTQMSKQVDCSPAGVKALDSRQGVGEKNTFILATLGTGVPVEGTLPLVTTNFSPLPAPICPPAPGSASVPHSVPDAFQVPLSVPAPVPHSGLVPVQVATSVPAPSPPLAPVPALAPAPPSVPTLISDSNPLSVSASVLVPVPASAPPSGPVPLSAPAPAPLSVPVSAPPLALIQAPVPPSAPTLVLAPVPTPVLAPMPASTPPAAPAPPSVPMPTPTPSSGPPSTPTLIPAFAPTPVPAPTPAPIFTPAPTPMPAATPAAIPTSAPIPASFSLSRVCFPAAQAPAMQKVPLSFQPGTVLTPSQPLVYIPPPSCGQPLSVATLPTTLGVSSTLTLPVLPSYLQDRCLPGVLASPELRSYPYAFSVARPLTSDSKLVSLEVNRLPCTSPSGSTTTQPAPDGVPGPLADTSLVTASAKVLPTPQPLLPAPSGSSAPPHPAKMPSGTEQQTEGTSVTFSPLKSPPQLEREMASPPECSEMPLDLSSKSNRQKLPLPNQRKTPPMPVLTPVHTSSKALLSTVLSRSQRTTQAAGGNVTSCLGSTSSPFVIFPEIVRNGDPSTWVKNSTALISTIPGTYVGVANPVPASLLLNKDPNLGLNRDPRHLPKQEPISIIDQGEPKGTGATCGKKGSQAGAEGQPSTVKRYTPARIAPGLPGCQTKELSLWKPTGPANIYPRCSVNGKPTSTQVLPVGWSPYHQASLLSIGISSAGQLTPSQGAPIRPTSVVSEFSGVPSLSSSEAVHGLPEGQPRPGGSFVPEQDPVTKNKTCRIAAKPYEEQVNPVLLTLSPQTGTLALSVQPSGGDIRMNQGPEESESHLCSDSTPKMEGPQGACGLKLAGDTKPKNQVLATYMSHELVLATPQNLPKMPELPLLPHDSHPKELILDVVPSSRRGSSTERPQLGSQVDLGRVKMEKVDGDVVFNLATCFRADGLPVAPQRGQAEVRAKAGQARVKQESVGVFACKNKWQPDDVTESLPPKKMKCGKEKDSEEQQLQPQAKAVVRSSHRPKCRKLPSDPQESTKKSPRGASDSGKEHNGVRGKHKHRKPTKPESQSPGKRADSHEEGSLEKKAKSSFRDFIPVVLSTRTRSQSGSICSSFAGMADSDMGSQEVFPTEEEEEVTPTPAKRRKVRKTQRDTQYRSHHAQDKSLLSQGRRHLWRAREMPWRTEAARQMWDTNEEEEEEEEEGLLKRKKRRRQKSRKYQTGEYLTEQEDEQRRKGRADLKARKQKTSSSQSLEHRLRNRNLLLPNKVQGISDSPNGFLPNNLEEPACLENSEKPSGKRKCKTKHMATVSEEAKGKGRWSQQKTRSPKSPTPVKPTEPCTPSKSRSASSEEASESPTARQIPPEARRLIVNKNAGETLLQRAARLGYKDVVLYCLQKDSEDVNHRDNAGYTALHEACSRGWTDILNILLEHGANVNCSAQDGTRPVHDAVVNDNLETIWLLLSYGADPTLATYSGQTAMKLASSDTMKRFLSDHLSDLQGRAEGDPGVSWDFYSSSVLEEKDGFACDLLHNPPGSSDQEGDDPMEEDDFMFELSDKPLLPCYNLQVSVSRGPCNWFLFSDVLKRLKLSSRIFQARFPHFEITTMPKAEFYRQVASSQLLTPAERPGGLDDRSPPGSSETVELVRYEPDLLRLLGSEVEFQSCNS.

3 disordered regions span residues 65–101, 113–137, and 343–368; these read VGSG…KMDY, VPLS…NSRA, and ASTP…GPPS. The span at 83–97 shows a compositional bias: basic and acidic residues; sequence KLGHKSEDKPDDPQP. The residue at position 496 (Ser496) is a Phosphoserine. Polar residues-rich tracts occupy residues 527 to 539 and 586 to 600; these read PCTS…TTQP and GTEQ…TFSP. 2 disordered regions span residues 527–550 and 562–646; these read PCTS…PLAD and PTPQ…PMPV. Phosphoserine occurs at positions 599 and 613. Lys747 participates in a covalent cross-link: Glycyl lysine isopeptide (Lys-Gly) (interchain with G-Cter in SUMO2). Disordered regions lie at residues 753–781, 876–901, and 937–977; these read IIDQ…QPST, SSSE…EQDP, and VQPS…LKLA. A phosphoserine mark is found at Ser1029 and Ser1033. Lys1092 is covalently cross-linked (Glycyl lysine isopeptide (Lys-Gly) (interchain with G-Cter in SUMO2)). 2 disordered regions span residues 1107–1293 and 1312–1487; these read PDDV…QGRR and WDTN…PEAR. Ser1162 carries the phosphoserine modification. Residues 1176–1185 are compositionally biased toward basic residues; sequence VRGKHKHRKP. The span at 1195–1213 shows a compositional bias: basic and acidic residues; the sequence is KRADSHEEGSLEKKAKSSF. Positions 1222–1234 are enriched in polar residues; sequence STRTRSQSGSICS. Residues 1271–1284 are compositionally biased toward basic and acidic residues; sequence TQRDTQYRSHHAQD. The span at 1314-1324 shows a compositional bias: acidic residues; sequence TNEEEEEEEEE. A Nuclear localization signal motif is present at residues 1328 to 1336; that stretch reads KRKKRRRQK. Positions 1328–1339 are enriched in basic residues; the sequence is KRKKRRRQKSRK. Over residues 1352–1363 the composition is skewed to basic and acidic residues; sequence EQRRKGRADLKA. Over residues 1440-1449 the composition is skewed to polar residues; the sequence is WSQQKTRSPK. Residues 1461 to 1480 are compositionally biased toward low complexity; that stretch reads TPSKSRSASSEEASESPTAR. Ser1476 is modified (phosphoserine). ANK repeat units follow at residues 1529-1558, 1562-1591, and 1595-1623; these read AGYT…NVNC, DGTR…DPTL, and SGQT…QGRA. The tract at residues 1668–1785 is PCGF Ub-like fold domain (PUFD); required for the interaction with the KDM2B-SKP1 heterodimeric complex; the sequence is DDFMFELSDK…SEVEFQSCNS (118 aa).

This sequence belongs to the BCOR family. As to quaternary structure, interacts with PCGF1, forming heterodimers. The PCGF1-BCORL1 heterodimeric complex interacts with the KDM2B-SKP1 heterodimeric complex to form a homotetrameric polycomb repression complex 1 (PRC1.1). Interacts with SKP1. Interacts with CTBP1, HDAC4, HDAC5 and HDAC7. As to expression, detected in testis and prostate. Detected at lower levels in peripheral blood leukocytes and spleen. Mainly expressed in the spermatogonia and primary spermatocytes.

It is found in the nucleus. Transcriptional corepressor. May specifically inhibit gene expression when recruited to promoter regions by sequence-specific DNA-binding proteins such as BCL6. This repression may be mediated at least in part by histone deacetylase activities which can associate with this corepressor. This chain is BCL-6 corepressor-like protein 1, found in Homo sapiens (Human).